Here is a 530-residue protein sequence, read N- to C-terminus: Phosphoenolpyruvate carboxykinase (ATP) (530 aa).

Substrate contacts are provided by R57, Y193, and K199. Residues K199, H218, and 234–242 (GLSGTGKTT) contribute to the ATP site. The Mn(2+) site is built by K199 and H218. A Mn(2+)-binding site is contributed by D255. Residues E283, R320, and T445 each contribute to the ATP site. R320 contributes to the substrate binding site.

It belongs to the phosphoenolpyruvate carboxykinase (ATP) family. Mn(2+) is required as a cofactor.

The protein localises to the cytoplasm. The enzyme catalyses oxaloacetate + ATP = phosphoenolpyruvate + ADP + CO2. It participates in carbohydrate biosynthesis; gluconeogenesis. Involved in the gluconeogenesis. Catalyzes the conversion of oxaloacetate (OAA) to phosphoenolpyruvate (PEP) through direct phosphoryl transfer between the nucleoside triphosphate and OAA. The sequence is that of Phosphoenolpyruvate carboxykinase (ATP) from Leptospira biflexa serovar Patoc (strain Patoc 1 / Ames).